A 572-amino-acid polypeptide reads, in one-letter code: Triacylglycerol lipase OBL1 (572 aa).

A helical membrane pass occupies residues G110–L130. The segment at I320–K356 is disordered. Over residues S323–D334 the composition is skewed to low complexity. The span at D346–K356 shows a compositional bias: basic and acidic residues. The short motif at G391–G395 is the GXSXG element. S393 (nucleophile) is an active-site residue. Active-site charge relay system residues include D457 and H550.

Belongs to the AB hydrolase superfamily. Lipase family. As to expression, expressed in pollen grains and pollen tubes.

It localises to the lipid droplet. The protein localises to the membrane. The enzyme catalyses 1,2-di-(9Z-octadecenoyl)-glycerol + (9Z)-octadecenoate + H(+) = 1,2,3-tri-(9Z-octadecenoyl)-glycerol + H2O. It carries out the reaction 1-(9Z-octadecenoyl)-glycerol + H2O = glycerol + (9Z)-octadecenoate + H(+). Functionally, acid lipase that can hydrolyze a range of triacylglycerols without a clear preference for acyl-chains. Can also cleave 1,2-diacylglycerol, 1,3-diacylglycerol and 1-monoacylglycerol, but not phosphatidylcholine, phosphatidylethanolamine, or sterol esters. Required for pollen tube growth. Triacylglycerol hydrolysis by OBL1 may provide acyl groups for the synthesis of membrane lipids in growing pollen tubes. The polypeptide is Triacylglycerol lipase OBL1 (Nicotiana tabacum (Common tobacco)).